A 208-amino-acid polypeptide reads, in one-letter code: Transcription factor atf-4 homolog (208 aa).

Disordered regions lie at residues 18–47 and 106–165; these read HNQT…YFNP and ERRS…EKEE. Positions 110–120 are enriched in low complexity; sequence NSSASPASNWS. The span at 121-141 shows a compositional bias: basic and acidic residues; it reads SDEHDSQSEKSYHPYKTPEKK. One can recognise a bZIP domain in the interval 138-201; it reads PEKKERKKAQ…RYFKKFMTEM (64 aa). The basic motif stretch occupies residues 140–163; that stretch reads KKERKKAQNRLAATRYREKKRREK. Residues 173–187 are leucine-zipper; that stretch reads LSVTNGKLKDQVSEL.

Belongs to the bZIP family.

The protein localises to the nucleus. Functionally, transcription factor. Involved in positively modulating longevity and stress tolerance, probably acting by positively regulating expression of transsulfuration enzyme cth-2, leading to increased hydrogen sulfide production and therefore increased protein persulfidation, a protective modification of redox-reactive cysteines. May mediate longevity and increased stress resistance induced by mTORC1 suppression. This is Transcription factor atf-4 homolog from Caenorhabditis elegans.